A 152-amino-acid chain; its full sequence is Large ribosomal subunit protein bL21 (152 aa).

Residues 115–152 (VTSISNGEKPKKATTSAKPNTKKPSTAVKSSKVEKTPE) form a disordered region. The segment covering 127–143 (ATTSAKPNTKKPSTAVK) has biased composition (polar residues).

The protein belongs to the bacterial ribosomal protein bL21 family. Part of the 50S ribosomal subunit. Contacts protein L20.

Its function is as follows. This protein binds to 23S rRNA in the presence of protein L20. The sequence is that of Large ribosomal subunit protein bL21 from Prochlorococcus marinus (strain SARG / CCMP1375 / SS120).